Here is a 98-residue protein sequence, read N- to C-terminus: Small ribosomal subunit protein uS17 (98 aa).

It belongs to the universal ribosomal protein uS17 family. Part of the 30S ribosomal subunit.

Functionally, one of the primary rRNA binding proteins, it binds specifically to the 5'-end of 16S ribosomal RNA. This chain is Small ribosomal subunit protein uS17, found in Synechococcus sp. (strain CC9605).